Here is a 910-residue protein sequence, read N- to C-terminus: Protein translocase subunit SecA (910 aa).

ATP is bound by residues Gln86, 104–108 (GEGKT), and Asp499. Cys894, Cys896, Cys905, and His906 together coordinate Zn(2+).

It belongs to the SecA family. As to quaternary structure, monomer and homodimer. Part of the essential Sec protein translocation apparatus which comprises SecA, SecYEG and auxiliary proteins SecDF-YajC and YidC. It depends on Zn(2+) as a cofactor.

Its subcellular location is the cell inner membrane. It localises to the cytoplasm. It catalyses the reaction ATP + H2O + cellular proteinSide 1 = ADP + phosphate + cellular proteinSide 2.. Its function is as follows. Part of the Sec protein translocase complex. Interacts with the SecYEG preprotein conducting channel. Has a central role in coupling the hydrolysis of ATP to the transfer of proteins into and across the cell membrane, serving both as a receptor for the preprotein-SecB complex and as an ATP-driven molecular motor driving the stepwise translocation of polypeptide chains across the membrane. In Rickettsia bellii (strain OSU 85-389), this protein is Protein translocase subunit SecA.